The sequence spans 642 residues: Probable malate:quinone oxidoreductase (642 aa).

The segment at 1 to 142 (MIVVFRHEST…TTRGDKRKLN (142 aa)) is unknown. Residues 143–642 (MSDSPKNAQK…TQKTLKLEKA (500 aa)) form an MQO domain region.

The protein in the C-terminal section; belongs to the MQO family. Requires FAD as cofactor.

The catalysed reaction is (S)-malate + a quinone = a quinol + oxaloacetate. The protein operates within carbohydrate metabolism; tricarboxylic acid cycle; oxaloacetate from (S)-malate (quinone route): step 1/1. The polypeptide is Probable malate:quinone oxidoreductase (mqo) (Corynebacterium efficiens (strain DSM 44549 / YS-314 / AJ 12310 / JCM 11189 / NBRC 100395)).